A 269-amino-acid chain; its full sequence is 4-hydroxy-tetrahydrodipicolinate reductase (269 aa).

11-16 (GPIGRM) contacts NAD(+). Lys-39 is an NADP(+) binding site. Residues 101 to 103 (GTT) and 125 to 128 (ASNF) contribute to the NAD(+) site. Catalysis depends on His-158, which acts as the Proton donor/acceptor. His-159 lines the (S)-2,3,4,5-tetrahydrodipicolinate pocket. Lys-162 serves as the catalytic Proton donor. 168 to 169 (GT) is a binding site for (S)-2,3,4,5-tetrahydrodipicolinate.

It belongs to the DapB family. As to quaternary structure, homotetramer.

Its subcellular location is the cytoplasm. The enzyme catalyses (S)-2,3,4,5-tetrahydrodipicolinate + NAD(+) + H2O = (2S,4S)-4-hydroxy-2,3,4,5-tetrahydrodipicolinate + NADH + H(+). It carries out the reaction (S)-2,3,4,5-tetrahydrodipicolinate + NADP(+) + H2O = (2S,4S)-4-hydroxy-2,3,4,5-tetrahydrodipicolinate + NADPH + H(+). It participates in amino-acid biosynthesis; L-lysine biosynthesis via DAP pathway; (S)-tetrahydrodipicolinate from L-aspartate: step 4/4. Its function is as follows. Catalyzes the conversion of 4-hydroxy-tetrahydrodipicolinate (HTPA) to tetrahydrodipicolinate. The protein is 4-hydroxy-tetrahydrodipicolinate reductase of Buchnera aphidicola subsp. Acyrthosiphon pisum (strain 5A).